The following is an 89-amino-acid chain: Neuropeptide F (89 aa).

Residues 1–29 form the signal peptide; the sequence is MASGTFTQRLLVALMIFALIADLSTLVAA. Residue Phe-61 is modified to Phenylalanine amide. Positions 65 to 89 are excised as a propeptide; the sequence is GGYLNPAIFGQDEQEVDWQDSTFSR.

The protein belongs to the NPY family.

It is found in the secreted. In terms of biological role, an integral part of the sensory system that mediates food signaling, providing the neural basis for the regulation of food response; coordinates larval foraging and social behavior changes during development. May have a hormonal role in females. This is Neuropeptide F from Anopheles gambiae (African malaria mosquito).